Here is a 325-residue protein sequence, read N- to C-terminus: Isoaspartyl peptidase/L-asparaginase (325 aa).

Residue Thr193 is the Nucleophile of the active site. Residues Arg221–Asp224 and Thr243–Gly246 contribute to the substrate site.

Belongs to the Ntn-hydrolase family. Heterotetramer of two alpha and two beta chains arranged as a dimer of alpha/beta heterodimers. In terms of processing, cleaved into an alpha and beta chain by autocatalysis; this activates the enzyme. The N-terminal residue of the beta subunit is responsible for the nucleophile hydrolase activity. Expressed in ripening seeds and developing nodules.

It catalyses the reaction Cleavage of a beta-linked Asp residue from the N-terminus of a polypeptide.. Degrades proteins damaged by L-isoaspartyl residue formation (also known as beta-Asp residues). Also has L-asparaginase activity, which is used to liberate stored nitrogen during seed development. In Lupinus luteus (European yellow lupine), this protein is Isoaspartyl peptidase/L-asparaginase.